We begin with the raw amino-acid sequence, 257 residues long: Hydroxyacylglutathione hydrolase (257 aa).

Positions 54, 56, 58, 59, 113, 137, and 175 each coordinate Zn(2+).

This sequence belongs to the metallo-beta-lactamase superfamily. Glyoxalase II family. As to quaternary structure, monomer. The cofactor is Zn(2+).

The catalysed reaction is an S-(2-hydroxyacyl)glutathione + H2O = a 2-hydroxy carboxylate + glutathione + H(+). It functions in the pathway secondary metabolite metabolism; methylglyoxal degradation; (R)-lactate from methylglyoxal: step 2/2. Its function is as follows. Thiolesterase that catalyzes the hydrolysis of S-D-lactoyl-glutathione to form glutathione and D-lactic acid. The sequence is that of Hydroxyacylglutathione hydrolase from Nostoc sp. (strain PCC 7120 / SAG 25.82 / UTEX 2576).